We begin with the raw amino-acid sequence, 232 residues long: 7-cyano-7-deazaguanine synthase (232 aa).

F8–L18 lines the ATP pocket. Zn(2+)-binding residues include C189, C198, C201, and C204.

This sequence belongs to the QueC family. Requires Zn(2+) as cofactor.

It carries out the reaction 7-carboxy-7-deazaguanine + NH4(+) + ATP = 7-cyano-7-deazaguanine + ADP + phosphate + H2O + H(+). It functions in the pathway purine metabolism; 7-cyano-7-deazaguanine biosynthesis. Its function is as follows. Catalyzes the ATP-dependent conversion of 7-carboxy-7-deazaguanine (CDG) to 7-cyano-7-deazaguanine (preQ(0)). The sequence is that of 7-cyano-7-deazaguanine synthase from Serratia proteamaculans (strain 568).